The primary structure comprises 180 residues: MNKKFILPPSEIELFQEMIKGTKKLPQDKIRHQTPRKKVTHYPTERLQQEQIDASYYFSDEFQPNLATEGPMRYLREGANAYELKKLRRGDYVPEFFLDLHGLTQLIAKQEIGALIAACRREHVYCACIMHGHGKHILKQQTPLWLAQHPDIIAFHQAPKEWGGDAALLLLVENDDIARR.

Residues 98–173 form the Smr domain; that stretch reads LDLHGLTQLI…GDAALLLLVE (76 aa).

The protein belongs to the SmrB family. As to quaternary structure, associates with collided ribosomes, but not with correctly translating polysomes.

Acts as a ribosome collision sensor. Detects stalled/collided disomes (pairs of ribosomes where the leading ribosome is stalled and a second ribosome has collided with it) and endonucleolytically cleaves mRNA at the 5' boundary of the stalled ribosome. Stalled/collided disomes form a new interface (primarily via the 30S subunits) that binds SmrB. Cleaved mRNA becomes available for tmRNA ligation, leading to ribosomal subunit dissociation and rescue of stalled ribosomes. The sequence is that of Ribosome rescue factor SmrB from Proteus mirabilis (strain HI4320).